We begin with the raw amino-acid sequence, 353 residues long: Small ribosomal subunit biogenesis GTPase RsgA (353 aa).

The segment at 1–24 (MSKNKLSKGQQRRVKANHQRRLKT) is disordered. Positions 10 to 23 (QQRRVKANHQRRLK) are enriched in basic residues. Residues 104–274 (ASVLTRPDFY…VIDSPGVREF (171 aa)) form the CP-type G domain. GTP is bound by residues 160–163 (NKID) and 214–222 (GQSGVGKSS). The Zn(2+) site is built by Cys298, Cys303, His305, and Cys311.

Belongs to the TRAFAC class YlqF/YawG GTPase family. RsgA subfamily. As to quaternary structure, monomer. Associates with 30S ribosomal subunit, binds 16S rRNA. Requires Zn(2+) as cofactor.

It is found in the cytoplasm. Functionally, one of several proteins that assist in the late maturation steps of the functional core of the 30S ribosomal subunit. Helps release RbfA from mature subunits. May play a role in the assembly of ribosomal proteins into the subunit. Circularly permuted GTPase that catalyzes slow GTP hydrolysis, GTPase activity is stimulated by the 30S ribosomal subunit. The polypeptide is Small ribosomal subunit biogenesis GTPase RsgA (Klebsiella pneumoniae subsp. pneumoniae (strain ATCC 700721 / MGH 78578)).